We begin with the raw amino-acid sequence, 338 residues long: Methionine import ATP-binding protein MetN 1 (338 aa).

The ABC transporter domain occupies 2 to 241 (IELHQVSKSF…AKHATTKRFV (240 aa)). ATP is bound at residue 38–45 (GYSGAGKS).

This sequence belongs to the ABC transporter superfamily. Methionine importer (TC 3.A.1.24) family. The complex is composed of two ATP-binding proteins (MetN), two transmembrane proteins (MetI) and a solute-binding protein (MetQ).

It localises to the cell membrane. The catalysed reaction is L-methionine(out) + ATP + H2O = L-methionine(in) + ADP + phosphate + H(+). It carries out the reaction D-methionine(out) + ATP + H2O = D-methionine(in) + ADP + phosphate + H(+). Functionally, part of the ABC transporter complex MetNIQ involved in methionine import. Responsible for energy coupling to the transport system. This chain is Methionine import ATP-binding protein MetN 1, found in Listeria monocytogenes serovar 1/2a (strain ATCC BAA-679 / EGD-e).